A 445-amino-acid polypeptide reads, in one-letter code: Argininosuccinate synthase (445 aa).

Residues 17–25 (AFSGGLDTS) and Ala-43 each bind ATP. Position 99 (Tyr-99) interacts with L-citrulline. The ATP site is built by Gly-129 and Thr-131. 3 residues coordinate L-aspartate: Thr-131, Asn-135, and Asp-136. Asn-135 serves as a coordination point for L-citrulline. Asp-136 provides a ligand contact to ATP. The L-citrulline site is built by Arg-139 and Ser-192. Asp-194 provides a ligand contact to ATP. L-citrulline contacts are provided by Thr-201, Glu-203, and Glu-280.

This sequence belongs to the argininosuccinate synthase family. Type 2 subfamily. In terms of assembly, homotetramer.

The protein resides in the cytoplasm. It carries out the reaction L-citrulline + L-aspartate + ATP = 2-(N(omega)-L-arginino)succinate + AMP + diphosphate + H(+). It participates in amino-acid biosynthesis; L-arginine biosynthesis; L-arginine from L-ornithine and carbamoyl phosphate: step 2/3. This Ralstonia pickettii (strain 12J) protein is Argininosuccinate synthase.